Here is a 249-residue protein sequence, read N- to C-terminus: Triosephosphate isomerase (249 aa).

12 to 14 (NWK) contributes to the substrate binding site. Histidine 96 serves as the catalytic Electrophile. Glutamate 166 acts as the Proton acceptor in catalysis. Substrate-binding positions include glycine 172, serine 211, and 232-233 (GG).

It belongs to the triosephosphate isomerase family. Homodimer.

Its subcellular location is the cytoplasm. The enzyme catalyses D-glyceraldehyde 3-phosphate = dihydroxyacetone phosphate. Its pathway is carbohydrate biosynthesis; gluconeogenesis. It functions in the pathway carbohydrate degradation; glycolysis; D-glyceraldehyde 3-phosphate from glycerone phosphate: step 1/1. Functionally, involved in the gluconeogenesis. Catalyzes stereospecifically the conversion of dihydroxyacetone phosphate (DHAP) to D-glyceraldehyde-3-phosphate (G3P). This is Triosephosphate isomerase from Xanthobacter flavus.